Consider the following 131-residue polypeptide: Snaclec coagulation factor IX/factor X-binding protein subunit A (131 aa).

Residues 1 to 131 form the C-type lectin domain; it reads DCLPGWSSHE…EEPQRFTCEI (131 aa). Cystine bridges form between cysteine 2–cysteine 13, cysteine 30–cysteine 129, and cysteine 104–cysteine 121. 3 residues coordinate Ca(2+): serine 41, glutamate 43, and glutamate 47. Glutamate 130 provides a ligand contact to Ca(2+).

It belongs to the snaclec family. Heterodimer of subunits A and B; disulfide-linked. Expressed by the venom gland.

Its subcellular location is the secreted. Functionally, anticoagulant protein which binds to coagulation factor IX (F9) and coagulation factor X (F10) in the presence of calcium. It may bind the gamma-carboxyglutamic acid-domain regions of factors with a 1 to 1 stoichiometry. The dissociation constant (K(d)) are 6.6 nM for factor IX (F9) and 125 nM for factor X (F10). Does not bind carbohydrates. The polypeptide is Snaclec coagulation factor IX/factor X-binding protein subunit A (Echis carinatus (Saw-scaled viper)).